The following is a 217-amino-acid chain: Large ribosomal subunit protein uL3 (217 aa).

Gln154 is modified (N5-methylglutamine).

It belongs to the universal ribosomal protein uL3 family. As to quaternary structure, part of the 50S ribosomal subunit. Forms a cluster with proteins L14 and L19. Post-translationally, methylated by PrmB.

One of the primary rRNA binding proteins, it binds directly near the 3'-end of the 23S rRNA, where it nucleates assembly of the 50S subunit. In Burkholderia ambifaria (strain ATCC BAA-244 / DSM 16087 / CCUG 44356 / LMG 19182 / AMMD) (Burkholderia cepacia (strain AMMD)), this protein is Large ribosomal subunit protein uL3.